Reading from the N-terminus, the 171-residue chain is UPF0398 protein SEQ_1788 (171 aa).

It belongs to the UPF0398 family.

The chain is UPF0398 protein SEQ_1788 from Streptococcus equi subsp. equi (strain 4047).